Here is a 116-residue protein sequence, read N- to C-terminus: WRMITQEKAQVIVMTTKEVERGRNKCIRYWPPEGESKEYGAYTLLNAKENDFRDYTWRQFVITKESDPPYKQIIYHHHFKVWPDHGVPSDPGGVLNFLHEINECQRSLKNPGPVIV.

In terms of domain architecture, Tyrosine-protein phosphatase spans Trp-1–Val-116. Substrate is bound at residue Asp-84.

It belongs to the protein-tyrosine phosphatase family.

It catalyses the reaction O-phospho-L-tyrosyl-[protein] + H2O = L-tyrosyl-[protein] + phosphate. The sequence is that of Tyrosine-protein phosphatase 14 (STY-14) from Styela plicata (Wrinkled sea squirt).